Consider the following 877-residue polypeptide: Potassium transporter 23 (877 aa).

2 disordered regions span residues 1 to 60 (MDDD…SLDG) and 72 to 92 (ASAGGASGGGGGGGPLSRASS). Topologically, residues 1 to 126 (MDDDDSGIQE…RGAHGHSSKE (126 aa)) are cytoplasmic. Pro residues predominate over residues 12–28 (PAPPPPPPPPPPPPPPL). A compositionally biased stretch (gly residues) spans 76–86 (GASGGGGGGGP). The helical transmembrane segment at 127-147 (ISMLSTVAMAFQTLGVVYGDM) threads the bilayer. The Extracellular portion of the chain corresponds to 148-173 (GTSPLYVFSDVFSKVPIKSEVEILGA). The helical transmembrane segment at 174–194 (LSLVMYTIALIPFAKYVFIVL) threads the bilayer. Topologically, residues 195–260 (KANDNGEGGT…SLEKNPVFKN (66 aa)) are cytoplasmic. The helical transmembrane segment at 261–281 (ILLFLVLMGTSMVIGDGILTP) threads the bilayer. The Extracellular portion of the chain corresponds to 282 to 295 (SMSVMSAVSGLQGR). Residues 296–316 (VPGFGTDAVVIVSILFLVLLF) traverse the membrane as a helical segment. Topologically, residues 317–325 (SVQRFGTGK) are cytoplasmic. A helical membrane pass occupies residues 326–346 (VGFMFAPILALWFINLGTIGI). Residues 347 to 379 (YNLAKYDISVVRAFNPVYIYLFFQTNGIKAWSA) are Extracellular-facing. The helical transmembrane segment at 380-400 (LGGCVLCITGAEAMFADLGHF) threads the bilayer. The Cytoplasmic segment spans residues 401 to 406 (SVKSIQ). The chain crosses the membrane as a helical span at residues 407 to 427 (VAFTAVVFPCLLIAYMGQAAY). Over 428–441 (LMKYPFAVERIFYD) the chain is Extracellular. The helical transmembrane segment at 442 to 462 (SVPEILFWPVFVIATLAAMIA) threads the bilayer. The Cytoplasmic portion of the chain corresponds to 463 to 498 (SQAMISATFSCIKQAMALGCFPRIKIIHTSKKVMGQ). A helical membrane pass occupies residues 499-519 (IYIPVMNWFLMVMCIIIVATF). Residues 520 to 524 (RSTND) lie on the Extracellular side of the membrane. A helical transmembrane segment spans residues 525–545 (IANAYGIAEVGVMMVSTALVT). The Cytoplasmic segment spans residues 546–555 (LVMLLIWQTN). A helical transmembrane segment spans residues 556 to 578 (LFLVMCFPVIFGSVEFVYLTAVL). Topologically, residues 579-583 (SKIQE) are extracellular. A helical membrane pass occupies residues 584–604 (GGWLPLAFSSLFLCIMYTWNY). Over 605–877 (GSVLKYQSEM…IMRVGMTYMV (273 aa)) the chain is Cytoplasmic.

Belongs to the HAK/KUP transporter (TC 2.A.72.3) family.

It localises to the membrane. High-affinity potassium transporter. The sequence is that of Potassium transporter 23 (HAK23) from Oryza sativa subsp. japonica (Rice).